The primary structure comprises 384 residues: 23S rRNA (uracil(747)-C(5))-methyltransferase RlmC (384 aa).

Residues cysteine 7, cysteine 15, cysteine 18, and cysteine 94 each contribute to the [4Fe-4S] cluster site. S-adenosyl-L-methionine is bound by residues glutamine 219, phenylalanine 248, glutamate 269, and asparagine 316. Catalysis depends on cysteine 343, which acts as the Nucleophile.

The protein belongs to the class I-like SAM-binding methyltransferase superfamily. RNA M5U methyltransferase family. RlmC subfamily.

It catalyses the reaction uridine(747) in 23S rRNA + S-adenosyl-L-methionine = 5-methyluridine(747) in 23S rRNA + S-adenosyl-L-homocysteine + H(+). In terms of biological role, catalyzes the formation of 5-methyl-uridine at position 747 (m5U747) in 23S rRNA. This chain is 23S rRNA (uracil(747)-C(5))-methyltransferase RlmC, found in Shewanella sp. (strain MR-4).